The following is a 219-amino-acid chain: MENCRTPTNKTQITLNRTPTLKERRWNTLKVNTTNVRCSTPIFGNFRSPNLSPIESMGTKKSPVSPMRFAFKKPPAKAHPHPHQHQHHHHHHKHIHRTQLKPPPFILPKPQEEIIEPEREIKICSSPDTFSDDSNMETSLVVESRRRSIKASNHSYVVNHAANVEQILMHMGLENYVTNFEEAHIDLVKLASMERADLVKIGLNADEDCNRIMDVLQTL.

The segment covering 74–99 (PPAKAHPHPHQHQHHHHHHKHIHRTQ) has biased composition (basic residues). The tract at residues 74–104 (PPAKAHPHPHQHQHHHHHHKHIHRTQLKPPP) is disordered. The region spanning 159 to 219 (NHAANVEQIL…NRIMDVLQTL (61 aa)) is the SAM domain.

As to quaternary structure, interacts with polo. Interacts with cort. Post-translationally, probably ubiquitinated: degraded during the oocyte-to-embryo transition by the anaphase promoting complex/cyclosome (APC/C) containing cort protein.

The protein resides in the nucleus. Its subcellular location is the chromosome. Its function is as follows. Polo kinase inhibitor required to maintain G2 arrest in the meiotic cell cycle in females. Holds heterochromatically paired homologs together from the end of pachytene until metaphase I. Haploinsufficient locus for homologous achiasmate segregation and may be required for the maintenance of heterochromatic pairings. The sequence is that of Protein matrimony (mtrm) from Drosophila yakuba (Fruit fly).